Reading from the N-terminus, the 60-residue chain is Large ribosomal subunit protein bL32 (60 aa).

Positions 1–60 (MAVQQVKKSRSKRDMRRSHDSLTGPTLSTDKSTGELHLRHHVSPNGFYKGKKVVDTKSED) are disordered. The segment covering 7–16 (KKSRSKRDMR) has biased composition (basic residues).

It belongs to the bacterial ribosomal protein bL32 family.

This chain is Large ribosomal subunit protein bL32, found in Francisella philomiragia subsp. philomiragia (strain ATCC 25017 / CCUG 19701 / FSC 153 / O#319-036).